A 245-amino-acid chain; its full sequence is Myozenin-3 (245 aa).

S31 carries the phosphoserine modification. A binding to ACTN2, PPP3CA and TCAP region spans residues 50–67 (LLFQKRQRRVQKFTFELS). The tract at residues 67-108 (SESLQAILASSARGKVAGRAAQATVPNGLEEQNHHSETHVFQ) is binding to FLNC. The disordered stretch occupies residues 93 to 134 (NGLEEQNHHSETHVFQGSPGDPGITHLGAAGTGSVRSPSALA). A binding to ACTN2 region spans residues 180-201 (PIPRDYRNFNKTPVPFGGPHVR).

Belongs to the myozenin family. In terms of assembly, interacts with ACTN2, LDB3, FLNC, PPP3CA and TCAP. In terms of tissue distribution, expressed specifically in skeletal muscle and is enriched in fast-twitch muscle fibers. Not detected in heart.

The protein localises to the cytoplasm. Its subcellular location is the myofibril. It localises to the sarcomere. It is found in the z line. Myozenins may serve as intracellular binding proteins involved in linking Z line proteins such as alpha-actinin, gamma-filamin, TCAP/telethonin, LDB3/ZASP and localizing calcineurin signaling to the sarcomere. Plays an important role in the modulation of calcineurin signaling. May play a role in myofibrillogenesis. The protein is Myozenin-3 of Mus musculus (Mouse).